We begin with the raw amino-acid sequence, 329 residues long: Phenylalanine--tRNA ligase alpha subunit (329 aa).

E253 contributes to the Mg(2+) binding site.

This sequence belongs to the class-II aminoacyl-tRNA synthetase family. Phe-tRNA synthetase alpha subunit type 1 subfamily. In terms of assembly, tetramer of two alpha and two beta subunits. Mg(2+) serves as cofactor.

Its subcellular location is the cytoplasm. The catalysed reaction is tRNA(Phe) + L-phenylalanine + ATP = L-phenylalanyl-tRNA(Phe) + AMP + diphosphate + H(+). This Coxiella burnetii (strain CbuK_Q154) (Coxiella burnetii (strain Q154)) protein is Phenylalanine--tRNA ligase alpha subunit.